The primary structure comprises 1072 residues: DNA-directed RNA polymerase subunit beta (1072 aa).

The protein belongs to the RNA polymerase beta chain family. As to quaternary structure, in plastids the minimal PEP RNA polymerase catalytic core is composed of four subunits: alpha, beta, beta', and beta''. When a (nuclear-encoded) sigma factor is associated with the core the holoenzyme is formed, which can initiate transcription.

The protein resides in the plastid. It localises to the chloroplast. It catalyses the reaction RNA(n) + a ribonucleoside 5'-triphosphate = RNA(n+1) + diphosphate. Functionally, DNA-dependent RNA polymerase catalyzes the transcription of DNA into RNA using the four ribonucleoside triphosphates as substrates. The polypeptide is DNA-directed RNA polymerase subunit beta (Lepidium virginicum (Virginia pepperweed)).